Reading from the N-terminus, the 266-residue chain is 5'-nucleotidase SurE (266 aa).

The a divalent metal cation site is built by aspartate 8, aspartate 9, serine 39, and asparagine 93.

The protein belongs to the SurE nucleotidase family. Requires a divalent metal cation as cofactor.

It is found in the cytoplasm. It catalyses the reaction a ribonucleoside 5'-phosphate + H2O = a ribonucleoside + phosphate. Its function is as follows. Nucleotidase that shows phosphatase activity on nucleoside 5'-monophosphates. The protein is 5'-nucleotidase SurE of Thermococcus gammatolerans (strain DSM 15229 / JCM 11827 / EJ3).